The following is a 312-amino-acid chain: Methionyl-tRNA formyltransferase (312 aa).

Residue 107 to 110 coordinates (6S)-5,6,7,8-tetrahydrofolate; the sequence is SLLP.

It belongs to the Fmt family.

It carries out the reaction L-methionyl-tRNA(fMet) + (6R)-10-formyltetrahydrofolate = N-formyl-L-methionyl-tRNA(fMet) + (6S)-5,6,7,8-tetrahydrofolate + H(+). Functionally, attaches a formyl group to the free amino group of methionyl-tRNA(fMet). The formyl group appears to play a dual role in the initiator identity of N-formylmethionyl-tRNA by promoting its recognition by IF2 and preventing the misappropriation of this tRNA by the elongation apparatus. This Endomicrobium trichonymphae protein is Methionyl-tRNA formyltransferase.